We begin with the raw amino-acid sequence, 89 residues long: UPF0223 protein BCE_4008 (89 aa).

Belongs to the UPF0223 family.

This chain is UPF0223 protein BCE_4008, found in Bacillus cereus (strain ATCC 10987 / NRS 248).